A 354-amino-acid chain; its full sequence is NADH-quinone oxidoreductase subunit H (354 aa).

The next 8 helical transmembrane spans lie at 23 to 43, 91 to 111, 124 to 144, 162 to 182, 203 to 223, 250 to 270, 291 to 311, and 330 to 350; these read LVRA…LILW, YIIA…VVPF, LLYV…AGWA, ISYE…TGSL, ILSW…ISGV, GMAF…ISAM, IPGF…FIWL, and IFIP…VSPW.

The protein belongs to the complex I subunit 1 family. As to quaternary structure, NDH-1 is composed of 14 different subunits. Subunits NuoA, H, J, K, L, M, N constitute the membrane sector of the complex.

It is found in the cell inner membrane. The catalysed reaction is a quinone + NADH + 5 H(+)(in) = a quinol + NAD(+) + 4 H(+)(out). Functionally, NDH-1 shuttles electrons from NADH, via FMN and iron-sulfur (Fe-S) centers, to quinones in the respiratory chain. The immediate electron acceptor for the enzyme in this species is believed to be ubiquinone. Couples the redox reaction to proton translocation (for every two electrons transferred, four hydrogen ions are translocated across the cytoplasmic membrane), and thus conserves the redox energy in a proton gradient. This subunit may bind ubiquinone. This chain is NADH-quinone oxidoreductase subunit H, found in Ralstonia nicotianae (strain ATCC BAA-1114 / GMI1000) (Ralstonia solanacearum).